The chain runs to 312 residues: Methionyl-tRNA formyltransferase (312 aa).

112–115 is a binding site for (6S)-5,6,7,8-tetrahydrofolate; it reads SLLP.

It belongs to the Fmt family.

It carries out the reaction L-methionyl-tRNA(fMet) + (6R)-10-formyltetrahydrofolate = N-formyl-L-methionyl-tRNA(fMet) + (6S)-5,6,7,8-tetrahydrofolate + H(+). Attaches a formyl group to the free amino group of methionyl-tRNA(fMet). The formyl group appears to play a dual role in the initiator identity of N-formylmethionyl-tRNA by promoting its recognition by IF2 and preventing the misappropriation of this tRNA by the elongation apparatus. The protein is Methionyl-tRNA formyltransferase of Dehalococcoides mccartyi (strain ATCC BAA-2266 / KCTC 15142 / 195) (Dehalococcoides ethenogenes (strain 195)).